The primary structure comprises 357 residues: Low-salt glycan biosynthesis nucleotidyltransferase Agl11 (357 aa).

Mg(2+)-binding residues include Asp-108 and Asp-221.

This sequence belongs to the glucose-1-phosphate thymidylyltransferase family. Mg(2+) is required as a cofactor.

It participates in protein modification; protein glycosylation. Its pathway is cell surface structure biogenesis; S-layer biogenesis. Its function is as follows. Nucleotidyltransferase involved in N-glycan biosynthetic pathway that takes place under low-salt conditions (1.75 M instead of 3.4 M). Participates in the formation of the tetrasaccharide present at 'Asn-532' of S-layer glycoprotein Csg, consisting of a sulfated hexose, 2 hexoses and rhamnose. Involved in the addition of final rhamnose (sugar 4) of the tetrasaccharide on the dolichol phosphate carrier. In Haloferax volcanii (strain ATCC 29605 / DSM 3757 / JCM 8879 / NBRC 14742 / NCIMB 2012 / VKM B-1768 / DS2) (Halobacterium volcanii), this protein is Low-salt glycan biosynthesis nucleotidyltransferase Agl11 (agl11).